We begin with the raw amino-acid sequence, 376 residues long: Putative 12-oxophytodienoate reductase 2 (376 aa).

FMN contacts are provided by residues 31-33 (PLT), Ala-64, and Gln-106. 178–181 (HGAH) serves as a coordination point for substrate. The Proton donor role is filled by Tyr-183. Residues Arg-230, Gly-301, and 322–323 (GR) each bind FMN.

It belongs to the NADH:flavin oxidoreductase/NADH oxidase family. The cofactor is FMN.

In terms of biological role, putative oxophytodienoate reductase that may be involved in the biosynthesis or metabolism of oxylipin signaling molecules. This chain is Putative 12-oxophytodienoate reductase 2 (OPR2), found in Oryza sativa subsp. japonica (Rice).